The following is a 265-amino-acid chain: Hemin import ATP-binding protein HmuV (265 aa).

The 237-residue stretch at 13 to 249 folds into the ABC transporter domain; the sequence is LKASNLHLQL…TAVENVYGWP (237 aa). 45-52 is an ATP binding site; sequence GPNGAGKS.

This sequence belongs to the ABC transporter superfamily. Heme (hemin) importer (TC 3.A.1.14.5) family. The complex is composed of two ATP-binding proteins (HmuV), two transmembrane proteins (HmuU) and a solute-binding protein (HmuT).

The protein localises to the cell inner membrane. Functionally, part of the ABC transporter complex HmuTUV involved in hemin import. Responsible for energy coupling to the transport system. This chain is Hemin import ATP-binding protein HmuV, found in Photobacterium damselae subsp. damselae (Listonella damsela).